Here is a 193-residue protein sequence, read N- to C-terminus: dTTP/UTP pyrophosphatase (193 aa).

Catalysis depends on Asp-71, which acts as the Proton acceptor.

It belongs to the Maf family. YhdE subfamily. Requires a divalent metal cation as cofactor.

The protein resides in the cytoplasm. It carries out the reaction dTTP + H2O = dTMP + diphosphate + H(+). The catalysed reaction is UTP + H2O = UMP + diphosphate + H(+). In terms of biological role, nucleoside triphosphate pyrophosphatase that hydrolyzes dTTP and UTP. May have a dual role in cell division arrest and in preventing the incorporation of modified nucleotides into cellular nucleic acids. This is dTTP/UTP pyrophosphatase from Geobacter sp. (strain M21).